The primary structure comprises 297 residues: Salivary glue protein Sgs-4 (297 aa).

The first 21 residues, 1–21 (MRLELLVVLLVGLAALAPSGS), serve as a signal peptide directing secretion. 21 tandem repeats follow at residues 26 to 32 (TEPPRCE), 33 to 39 (TEPPRCE), 40 to 46 (TEPPRCE), 47 to 53 (TEPPRCE), 54 to 60 (TEPPRCE), 61 to 67 (TTTPKCE), 68 to 74 (TTPPTCR), 75 to 81 (TEPPTCK), 82 to 88 (TEPPTCR), 89 to 95 (TEPPTCK), 96 to 102 (TKPPTCR), 103 to 109 (TEPPTCR), 110 to 116 (TEPPTCK), 117 to 123 (TKPPTCK), 124 to 130 (TEPPTCK), 131 to 137 (TEPPTCR), 138 to 144 (TEPPTCK), 145 to 151 (TEPPTCR), 152 to 158 (TEPPTCK), 159 to 165 (TEPPTCK), and 166 to 172 (TEPPTCK). The interval 26-84 (TEPPRCETEPPRCETEPPRCETEPPRCETEPPRCETTTPKCETTPPTCRTEPPTCKTEP) is disordered. The interval 26–179 (TEPPRCETEP…TCKTEPPCEK (154 aa)) is 22 X 7 AA approximate tandem repeats of T-[ETK]-[PT]-P-[RKT]-C-[ERK]. A compositionally biased stretch (basic and acidic residues) spans 27-58 (EPPRCETEPPRCETEPPRCETEPPRCETEPPR). Low complexity predominate over residues 59-84 (CETTTPKCETTPPTCRTEPPTCKTEP). Residues 141-174 (PTCKTEPPTCRTEPPTCKTEPPTCKTEPPTCKTE) show a composition bias toward low complexity. Disordered regions lie at residues 141–218 (PTCK…SGCG) and 243–297 (PDSK…KGGC). One copy of the 22; approximate repeat lies at 173–179 (TEPPCEK). Composition is skewed to basic residues over residues 181–208 (CTKR…HHNR) and 282–291 (NTTKKPRKTQ).

In terms of tissue distribution, salivary gland.

The protein resides in the secreted. The protein is Salivary glue protein Sgs-4 (Sgs4) of Drosophila melanogaster (Fruit fly).